The primary structure comprises 282 residues: Polyamine aminopropyltransferase (282 aa).

Positions 11 to 239 constitute a PABS domain; it reads IEWYPRGYGV…SPWSFLVGVK (229 aa). Gln36 serves as a coordination point for S-methyl-5'-thioadenosine. His67 and Asp91 together coordinate spermidine. Residues Glu111 and 142–143 each bind S-methyl-5'-thioadenosine; that span reads DG. Residue Asp160 is the Proton acceptor of the active site. Residue 160-163 participates in spermidine binding; the sequence is DSTD. Pro167 lines the S-methyl-5'-thioadenosine pocket.

The protein belongs to the spermidine/spermine synthase family. As to quaternary structure, homodimer or homotetramer.

Its subcellular location is the cytoplasm. It carries out the reaction S-adenosyl 3-(methylsulfanyl)propylamine + putrescine = S-methyl-5'-thioadenosine + spermidine + H(+). Its pathway is amine and polyamine biosynthesis; spermidine biosynthesis; spermidine from putrescine: step 1/1. In terms of biological role, catalyzes the irreversible transfer of a propylamine group from the amino donor S-adenosylmethioninamine (decarboxy-AdoMet) to putrescine (1,4-diaminobutane) to yield spermidine. The protein is Polyamine aminopropyltransferase of Thermococcus onnurineus (strain NA1).